The chain runs to 336 residues: Torsin-1B (336 aa).

Residues 1-24 (MRRIGAFGGSTALWALLAAHVAGA) form the signal peptide. Residue Asn-64 is glycosylated (N-linked (GlcNAc...) asparagine). 109–116 (GWAGTGKN) serves as a coordination point for ATP. Asn-165 carries an N-linked (GlcNAc...) asparagine glycan.

The protein belongs to the ClpA/ClpB family. Torsin subfamily. As to quaternary structure, homohexamer. Interacts with TOR1A; the interaction may be specific of neural tissues. Interacts with TOR1AIP1; TOR1AIP1 is required for TOR1B location on the nuclear membrane. Interacts (ATP-bound) with TOR1AIP2; important for endoplasmic reticulum integrity. N-glycosylated. In terms of tissue distribution, highly expressed in liver and muscle; lower expression levels are observed in brain (at protein level).

Its subcellular location is the endoplasmic reticulum lumen. It is found in the nucleus membrane. The enzyme catalyses ATP + H2O = ADP + phosphate + H(+). In terms of biological role, may serve as a molecular chaperone assisting in the proper folding of secreted and/or membrane proteins. Plays a role in non-neural cells nuclear envelope and endoplasmic reticulum integrity. May have a redundant function with TOR1A in non-neural tissues. In Mus musculus (Mouse), this protein is Torsin-1B (Tor1b).